Here is a 171-residue protein sequence, read N- to C-terminus: UPF0312 protein MW2606 (171 aa).

Belongs to the UPF0312 family.

The polypeptide is UPF0312 protein MW2606 (Staphylococcus aureus (strain MW2)).